The sequence spans 353 residues: Photosystem II protein D1 (353 aa).

Threonine 2 is modified (N-acetylthreonine). Threonine 2 is subject to Phosphothreonine. 3 consecutive transmembrane segments (helical) span residues 29 to 46 (YIGW…TATS), 118 to 133 (HFLL…EWEL), and 142 to 156 (WIAV…AATA). Chlorophyll a is bound at residue histidine 118. Tyrosine 126 contacts pheophytin a. [CaMn4O5] cluster contacts are provided by aspartate 170 and glutamate 189. Residues 197-218 (FHMLGVAGVFGGSLFSAMHGSL) traverse the membrane as a helical segment. Residue histidine 198 coordinates chlorophyll a. Residues histidine 215 and 264–265 (SF) contribute to the a quinone site. Histidine 215 serves as a coordination point for Fe cation. Position 272 (histidine 272) interacts with Fe cation. The chain crosses the membrane as a helical span at residues 274-288 (FLAAWPVVGIWFTAL). Histidine 332, glutamate 333, and alanine 344 together coordinate [CaMn4O5] cluster. Residues 345–353 (AIEAPAVNG) constitute a propeptide that is removed on maturation.

This sequence belongs to the reaction center PufL/M/PsbA/D family. PSII is composed of 1 copy each of membrane proteins PsbA, PsbB, PsbC, PsbD, PsbE, PsbF, PsbH, PsbI, PsbJ, PsbK, PsbL, PsbM, PsbT, PsbX, PsbY, PsbZ, Psb30/Ycf12, at least 3 peripheral proteins of the oxygen-evolving complex and a large number of cofactors. It forms dimeric complexes. Requires The D1/D2 heterodimer binds P680, chlorophylls that are the primary electron donor of PSII, and subsequent electron acceptors. It shares a non-heme iron and each subunit binds pheophytin, quinone, additional chlorophylls, carotenoids and lipids. D1 provides most of the ligands for the Mn4-Ca-O5 cluster of the oxygen-evolving complex (OEC). There is also a Cl(-1) ion associated with D1 and D2, which is required for oxygen evolution. The PSII complex binds additional chlorophylls, carotenoids and specific lipids. as cofactor. Tyr-161 forms a radical intermediate that is referred to as redox-active TyrZ, YZ or Y-Z. In terms of processing, C-terminally processed by CTPA; processing is essential to allow assembly of the oxygen-evolving complex and thus photosynthetic growth.

The protein resides in the plastid. It localises to the chloroplast thylakoid membrane. The enzyme catalyses 2 a plastoquinone + 4 hnu + 2 H2O = 2 a plastoquinol + O2. Its function is as follows. Photosystem II (PSII) is a light-driven water:plastoquinone oxidoreductase that uses light energy to abstract electrons from H(2)O, generating O(2) and a proton gradient subsequently used for ATP formation. It consists of a core antenna complex that captures photons, and an electron transfer chain that converts photonic excitation into a charge separation. The D1/D2 (PsbA/PsbD) reaction center heterodimer binds P680, the primary electron donor of PSII as well as several subsequent electron acceptors. This chain is Photosystem II protein D1, found in Conocephalum japonicum (Liverwort).